The sequence spans 220 residues: Deoxyribose-phosphate aldolase (220 aa).

Residue Asp92 is the Proton donor/acceptor of the active site. Lys155 (schiff-base intermediate with acetaldehyde) is an active-site residue. The Proton donor/acceptor role is filled by Lys184.

This sequence belongs to the DeoC/FbaB aldolase family. DeoC type 1 subfamily.

The protein resides in the cytoplasm. The enzyme catalyses 2-deoxy-D-ribose 5-phosphate = D-glyceraldehyde 3-phosphate + acetaldehyde. It participates in carbohydrate degradation; 2-deoxy-D-ribose 1-phosphate degradation; D-glyceraldehyde 3-phosphate and acetaldehyde from 2-deoxy-alpha-D-ribose 1-phosphate: step 2/2. In terms of biological role, catalyzes a reversible aldol reaction between acetaldehyde and D-glyceraldehyde 3-phosphate to generate 2-deoxy-D-ribose 5-phosphate. In Natranaerobius thermophilus (strain ATCC BAA-1301 / DSM 18059 / JW/NM-WN-LF), this protein is Deoxyribose-phosphate aldolase.